We begin with the raw amino-acid sequence, 726 residues long: AP-1 complex subunit beta-1 (726 aa).

This sequence belongs to the adaptor complexes large subunit family. Adaptor protein complex 1 (AP-1) is a heterotetramer composed of two large adaptins (gamma-type subunit APL4 and beta-type subunit APL2), a medium adaptin (mu-type subunit APM1) and a small adaptin (sigma-type subunit APS1). Interacts with CHC1. Interacts with APM2, probably forming an alternative AP-1-like complex.

It localises to the cell membrane. Its subcellular location is the membrane. The protein localises to the coated pit. Its function is as follows. Adaptins are components of the adaptor complexes which link clathrin to receptors in coated vesicles. Clathrin-associated protein complexes are believed to interact with the cytoplasmic tails of membrane proteins, leading to their selection and concentration. The AP-1 complex interacts directly with clathrin. The sequence is that of AP-1 complex subunit beta-1 (APL2) from Saccharomyces cerevisiae (strain ATCC 204508 / S288c) (Baker's yeast).